Consider the following 478-residue polypeptide: Early growth response protein 4 (478 aa).

The tract at residues 275–302 (TEGLPALLTPPGGEGGSGGEGGEFLAAP) is disordered. A compositionally biased stretch (gly residues) spans 286–296 (GGEGGSGGEGG). 3 consecutive C2H2-type zinc fingers follow at residues 372–396 (FACP…LRIH), 402–424 (FQCR…VRTH), and 430–452 (FACD…SKVH).

Belongs to the EGR C2H2-type zinc-finger protein family.

The protein resides in the nucleus. In terms of biological role, transcriptional regulator. Recognizes and binds to the DNA sequence 5'-GCGGGGGCG-3' (GSG). Activates the transcription of target genes whose products are required for mitogenesis and differentiation. This chain is Early growth response protein 4 (Egr4), found in Mus musculus (Mouse).